Reading from the N-terminus, the 356-residue chain is tRNA-specific 2-thiouridylase MnmA (356 aa).

Residues 6-13 (AMSGGVDS) and leucine 32 each bind ATP. The active-site Nucleophile is cysteine 101. Cysteines 101 and 193 form a disulfide. An ATP-binding site is contributed by glycine 125. The interval 143-145 (KDQ) is interaction with tRNA. The active-site Cysteine persulfide intermediate is cysteine 193.

Belongs to the MnmA/TRMU family.

The protein resides in the cytoplasm. The enzyme catalyses S-sulfanyl-L-cysteinyl-[protein] + uridine(34) in tRNA + AH2 + ATP = 2-thiouridine(34) in tRNA + L-cysteinyl-[protein] + A + AMP + diphosphate + H(+). Catalyzes the 2-thiolation of uridine at the wobble position (U34) of tRNA, leading to the formation of s(2)U34. In Mycolicibacterium smegmatis (strain ATCC 700084 / mc(2)155) (Mycobacterium smegmatis), this protein is tRNA-specific 2-thiouridylase MnmA.